We begin with the raw amino-acid sequence, 317 residues long: Cytochrome f (317 aa).

A signal peptide spans 1-34 (MINFKKQIMKKTTFFLCAMLLVSSILIAPRSSLA). Y35, C55, C58, and H59 together coordinate heme. Residues 284–304 (IIGLIAFFIGVGLTQILLVLK) traverse the membrane as a helical segment.

Belongs to the cytochrome f family. The 4 large subunits of the cytochrome b6-f complex are cytochrome b6, subunit IV (17 kDa polypeptide, PetD), cytochrome f and the Rieske protein, while the 4 small subunits are PetG, PetL, PetM and PetN. The complex functions as a dimer. It depends on heme as a cofactor.

It localises to the cellular thylakoid membrane. Functionally, component of the cytochrome b6-f complex, which mediates electron transfer between photosystem II (PSII) and photosystem I (PSI), cyclic electron flow around PSI, and state transitions. This chain is Cytochrome f, found in Prochlorococcus marinus (strain MIT 9515).